The chain runs to 71 residues: Conotoxin LvVIIB (71 aa).

A signal peptide spans Val-1–Ala-17. The propeptide occupies Asp-18–Arg-42. 3 disulfide bridges follow: Cys-43-Cys-57, Cys-50-Cys-62, and Cys-56-Cys-69.

Belongs to the conotoxin O1 superfamily. As to expression, expressed by the venom duct.

The protein resides in the secreted. This chain is Conotoxin LvVIIB, found in Conus lividus (Livid cone).